We begin with the raw amino-acid sequence, 393 residues long: Probable protein phosphatase 2C 72 (393 aa).

Residues 49-357 (EFSMAVVQAN…DDITVVVVFF (309 aa)) form the PPM-type phosphatase domain. Residues Asp88 and Gly89 each contribute to the Mn(2+) site. Residues 147-167 (LAAVGSCCLVGVICAGNLYIA) form a helical membrane-spanning segment. Mn(2+) is bound by residues Asp289 and Asp348.

The protein belongs to the PP2C family. Mg(2+) serves as cofactor. The cofactor is Mn(2+).

It localises to the membrane. It catalyses the reaction O-phospho-L-seryl-[protein] + H2O = L-seryl-[protein] + phosphate. The enzyme catalyses O-phospho-L-threonyl-[protein] + H2O = L-threonyl-[protein] + phosphate. The protein is Probable protein phosphatase 2C 72 of Oryza sativa subsp. japonica (Rice).